Consider the following 523-residue polypeptide: MAALRRFLWPPPRLSPALAPQQPFLSPWGRPAGTAPGMSGRPFSCREEDEGAVAEAAWRRRRWGELSIAAAAGGGLVGLVCYQLYGDPRADPSELAAPELEDPPRGRGLLPIPVAAAKETVATGRAITEDLDLYATSRERRFRLFASIECEGQLFMTPYDFILAVTTDEPKFAKTWKSLSKQELSQMLSETPPVWKGSSKLFRNLKERGVISYTEYLFLLCILTKPHAGFRIAFNMFDTDGNEMVDKKEFLVLQEIFRKKNEKRETKGDEEKRAMLRLQLYGYHSPTNSVLKTDAGELVSRSYWDTLRRSTSQALFSDLAERADDITSLVADTTLLVHFFGKKGKAELNFEDFYRFMDNLQTEVLEIEFLSYSNGMNTISEEDFAHILLRYTNVENTSVFLENVRYSISEEKGITFDEFRSFFQFLNNLEDFAIALNMYNFASRSIGQDEFKRAVYVATGLKLSPHLVNTVFKIFDVDKDDQLSYKEFIGIMKDRLHRGFRGYKTVQKYPTFKSCLKKELHSR.

The transit peptide at 1 to 6 (MAALRR) directs the protein to the mitochondrion. The EF-hand 1 domain maps to 226–261 (PHAGFRIAFNMFDTDGNEMVDKKEFLVLQEIFRKKN). D238, D240, N242, M244, D246, and E249 together coordinate Ca(2+). Residues 395-430 (ENTSVFLENVRYSISEEKGITFDEFRSFFQFLNNLE) form the EF-hand 2; degenerate domain. One can recognise an EF-hand 3 domain in the interval 464–499 (SPHLVNTVFKIFDVDKDDQLSYKEFIGIMKDRLHRG). The Ca(2+) site is built by D476, D478, D480, Q482, and E487.

It belongs to the MICU1 family. MICU3 subfamily. As to quaternary structure, heterodimer; disulfide-linked; heterodimerizes with MICU1. Heterodimerizes with isoform 3 of MICU1 (MICU1.1) in skeletal muscle. Component of the uniplex complex, composed of MCU, EMRE/SMDT1, MICU1 and MICU3 in a 4:4:1:1 stoichiometry. In terms of tissue distribution, predominantly expressed in skeletal muscle and central nervous system.

The protein resides in the mitochondrion intermembrane space. It localises to the mitochondrion inner membrane. In terms of biological role, tissue-specific calcium sensor of the mitochondrial calcium uniporter (MCU) channel, which specifically regulates MCU channel activity in the central nervous system and skeletal muscle. Senses calcium level via its EF-hand domains: compared to MICU1 and MICU2, MICU3 has a higher affinity for calcium. MICU1 and MICU3 form a disulfide-linked heterodimer that stimulates and inhibits MCU activity, depending on the concentration of calcium. At low calcium levels, MICU1 occludes the pore of the MCU channel, preventing mitochondrial calcium uptake. At higher calcium levels, calcium-binding to MICU1 and MICU3 induces a conformational change that weakens MCU-MICU1 interactions and moves the MICU1-MICU3 heterodimer away from the pore, allowing calcium permeation through the MCU channel. The high calcium affinity of MICU3 lowers the calcium threshold necessary for calcium permeation through the MCU channel. The MICU1-MICU3 heterodimer promotes flexibility of neurotransmission in neuronal cells by enhancing mitochondrial calcium uptake in presynapses. It is also required to increase mitochondrial calcium uptake in skeletal muscle cells, thereby increasing ATP production. The sequence is that of Calcium uptake protein 3, mitochondrial from Mus musculus (Mouse).